A 1009-amino-acid polypeptide reads, in one-letter code: Helicase-like transcription factor (1009 aa).

Residue Arg-27 is modified to Omega-N-methylarginine. A DNA-binding region spans residues 38-287; it reads EFQDVIPPDD…FSEKDRPENV (250 aa). A Glycyl lysine isopeptide (Lys-Gly) (interchain with G-Cter in SUMO2) cross-link involves residue Lys-112. Tyr-195 bears the Phosphotyrosine; by JAK2 mark. Residue Lys-211 forms a Glycyl lysine isopeptide (Lys-Gly) (interchain with G-Cter in SUMO2) linkage. 294–301 is an ATP binding site; sequence DDMGLGKT. The disordered stretch occupies residues 336 to 365; it reads DDSMKLGGNNTSEKADGLSKDASRCSEQPS. Over residues 348–359 the composition is skewed to basic and acidic residues; it reads EKADGLSKDASR. Residues Ser-397, Ser-398, and Ser-400 each carry the phosphoserine modification. A Helicase ATP-binding domain is found at 435–606; sequence IEDVAFACAL…WSLLSFLKLK (172 aa). The short motif at 557–560 is the DEGH box element; it reads DEGH. Thr-736 bears the Phosphothreonine mark. The RING-type zinc finger occupies 760–801; sequence CAICLDSLTVPVITHCAHVFCKPCICQVIQNEQPHAKCPLCR. A Helicase C-terminal domain is found at 837 to 996; the sequence is ALMHALTDLR…TKKPNADEMK (160 aa). The segment at 925-1009 is interaction with SP1 and SP3; that stretch reads SRVFLMDPAW…INEIRTLIDL (85 aa).

It belongs to the SNF2/RAD54 helicase family. RAD16 subfamily. In terms of assembly, interacts with SP1 and SP3 independently of DNA; the interaction with these transcriptional factors may be required for basal transcription of target genes. Interacts with EGR1; the interaction requires prior binding to DNA and represses c-Rel via a DNA looping mechanism. Interacts with GATA4. Interacts with PCNA; the interaction promotes polyubiquitination of PCNA through association with the UBE2B-RAD18 and UBE2V2-UBE2N ubiquitin ligase complexes. Interacts with RAD18, SHPRH, UBE2V2 and UBE2N. As to expression, expressed in brain, heart, kidney, liver, lung, pancreas, placenta and skeletal muscle.

The protein resides in the cytoplasm. Its subcellular location is the nucleus. It localises to the nucleolus. It is found in the nucleoplasm. The enzyme catalyses S-ubiquitinyl-[E2 ubiquitin-conjugating enzyme]-L-cysteine + [acceptor protein]-L-lysine = [E2 ubiquitin-conjugating enzyme]-L-cysteine + N(6)-ubiquitinyl-[acceptor protein]-L-lysine.. Its pathway is protein modification; protein ubiquitination. In terms of biological role, has both helicase and E3 ubiquitin ligase activities. Possesses intrinsic ATP-dependent nucleosome-remodeling activity; This activity may be required for transcriptional activation or repression of specific target promoters. These may include the SERPINE1 and HIV-1 promoters and the SV40 enhancer, to which this protein can bind directly. Plays a role in error-free postreplication repair (PRR) of damaged DNA and maintains genomic stability through acting as a ubiquitin ligase for 'Lys-63'-linked polyubiquitination of chromatin-bound PCNA. In Homo sapiens (Human), this protein is Helicase-like transcription factor (HLTF).